The primary structure comprises 313 residues: Glutathionyl-hydroquinone reductase PcpF (313 aa).

Catalysis depends on C53, which acts as the Nucleophile. Glutathione contacts are provided by residues W86, 119–122 (RVTI), and 137–138 (ES). Residues 161–285 (PAEFRPEIDR…INLRHAKAHY (125 aa)) form the GST C-terminal domain. Y184 functions as the Proton donor/acceptor in the catalytic mechanism.

The protein belongs to the GST superfamily. Xi-class GSH transferase family. In terms of assembly, homodimer.

The catalysed reaction is 2-(glutathione-S-yl)-hydroquinone + glutathione = hydroquinone + glutathione disulfide. Functionally, catalyzes glutathione (GSH)-dependent reduction of glutathionyl-hydroquinones (GS-HQs) to the corresponding hydroquinones. Can act on halogenated substrates such as GS-2,6-dichloro-p-hydroquinone (GS-DiCH) and GS-trichloro-p-hydroquinone (GS-TriCH). Involved in the degradation of pentachlorophenol (PCP), a toxic pollutant. The chain is Glutathionyl-hydroquinone reductase PcpF from Sphingobium chlorophenolicum.